The primary structure comprises 257 residues: MAATAGRLFRASLIRHVSAIPWGISASAALRPAASRRMCLTNALWSGSDQAKFAFSTSSSYHAPAVTQHAPYFKGTAVVSGEFKEISLDDFKGKYLVLFFYPLDFTFVCPTEIIAFSDKASEFHDVNCEVVAVSVDSHFSHLAWINTPRKNGGLGHMNIALLSDLTKQISRDYGVLLEGPGLALRGLFIIDPNGVIKHLSVNDLPVGRSVEETLRLVKAFQFVEAHGEVCPANWTPESPTIKPHPTASREYFEKVNQ.

Residues 1 to 62 (MAATAGRLFR…FAFSTSSSYH (62 aa)) constitute a mitochondrion transit peptide. The Thioredoxin domain maps to 64–222 (PAVTQHAPYF…TLRLVKAFQF (159 aa)). An N6-succinyllysine modification is found at lysine 84. Lysine 92 carries the N6-acetyllysine; alternate modification. Lysine 92 is modified (N6-succinyllysine; alternate). Cysteine 109 serves as the catalytic Cysteine sulfenic acid (-SOH) intermediate. Phosphothreonine is present on threonine 147.

This sequence belongs to the peroxiredoxin family. AhpC/Prx1 subfamily. Homodimer; disulfide-linked, upon oxidation. 6 homodimers assemble to form a ring-like dodecamer. Interacts with NEK6. Interacts with LRRK2. Interacts with MAP3K13. Interacts with RPS6KC1 (via PX domain). Post-translationally, phosphorylated by LRRK2; phosphorylation reduces perodixase activity. The enzyme can be inactivated by further oxidation of the cysteine sulfenic acid (C(P)-SOH) to sulphinic acid (C(P)-SO2H) and sulphonic acid (C(P)-SO3H) instead of its condensation to a disulfide bond. In terms of processing, S-palmitoylated. As to expression, predominantly expressed in adrenal cortex. Also detected in liver, renal cortex and medulla, and adrenal medulla (at protein level).

The protein localises to the mitochondrion matrix. The protein resides in the cytoplasm. It localises to the early endosome. It carries out the reaction a hydroperoxide + [thioredoxin]-dithiol = an alcohol + [thioredoxin]-disulfide + H2O. In terms of biological role, thiol-specific peroxidase that catalyzes the reduction of hydrogen peroxide and organic hydroperoxides to water and alcohols, respectively. Plays a role in cell protection against oxidative stress by detoxifying peroxides. Acts synergistically with MAP3K13 to regulate the activation of NF-kappa-B in the cytosol. Required for the maintenance of physical strength. The protein is Thioredoxin-dependent peroxide reductase, mitochondrial (PRDX3) of Bos taurus (Bovine).